Consider the following 254-residue polypeptide: Mediator of RNA polymerase II transcription subunit 8 (254 aa).

A coiled-coil region spans residues 154–190 (LEEREMGIQNVVTGLRRQLEDDERDEDEDEDDEEEEE). The segment at 167–234 (GLRRQLEDDE…SQQVQKGAGP (68 aa)) is disordered. The segment covering 173-199 (EDDERDEDEDEDDEEEEEGEGEDEEME) has biased composition (acidic residues).

The protein belongs to the Mediator complex subunit 8 family. In terms of assembly, component of the Mediator complex.

It is found in the nucleus. Component of the Mediator complex, a coactivator involved in the regulated transcription of nearly all RNA polymerase II-dependent genes. Mediator functions as a bridge to convey information from gene-specific regulatory proteins to the basal RNA polymerase II transcription machinery. Mediator is recruited to promoters by direct interactions with regulatory proteins and serves as a scaffold for the assembly of a functional preinitiation complex with RNA polymerase II and the general transcription factors. This chain is Mediator of RNA polymerase II transcription subunit 8 (med8), found in Aspergillus clavatus (strain ATCC 1007 / CBS 513.65 / DSM 816 / NCTC 3887 / NRRL 1 / QM 1276 / 107).